The sequence spans 132 residues: Intraflagellar transport protein 20 homolog (132 aa).

The segment at 70-132 is IFT57-binding; the sequence is MKAIGARNLL…EFIDQFIFQK (63 aa). Residues 74 to 116 adopt a coiled-coil conformation; sequence GARNLLKSIAKQREAQQQQLQALIAEKKTQLERYRVEYEALCK.

Component of the IFT complex B, at least composed of IFT20, IFT22, IFT25, IFT27, IFT46, IFT52, TRAF3IP1/IFT54, IFT57, IFT74, IFT80, IFT81, and IFT88. Interacts directly with IFT57 and KIF3B/Kinesin II subunit. Interacts with IFT88. Interacts with CEP83. Interacts with SPEF2 (via C-terminus). Interacts with CBL and CBLB. Interacts with TRIP11. Interacts with TTC21A. Interacts with SPATA1. Interacts with USH1G. Interacts with CCDC146. Interacts with CEP78; regulating IFT20 stability and localization. In terms of tissue distribution, expressed predominantly in the testis (at protein level). Expressed in kidney and retina. Expression is up-regulated during spermiogenesis.

The protein localises to the golgi apparatus. The protein resides in the cis-Golgi network. It is found in the cytoplasm. Its subcellular location is the cytoskeleton. It localises to the microtubule organizing center. The protein localises to the centrosome. The protein resides in the centriole. It is found in the cilium basal body. Its subcellular location is the cell projection. It localises to the cilium. The protein localises to the cytoplasmic vesicle. The protein resides in the secretory vesicle. It is found in the acrosome. Functionally, part of intraflagellar transport (IFT) particles involved in ciliary process assembly. May play a role in the trafficking of ciliary membrane proteins from the Golgi complex to the cilium. Regulates the ciliary platelet-derived growth factor receptor-alpha (PDGFRA) signaling pathway. Required for protein stability of E3 ubiquitin ligases CBL and CBLB that mediate ubiquitination and internalization of PDGFRA for proper feedback inhibition of PDGFRA signaling. Essential for male fertility. Plays an important role in spermatogenesis, particularly spermiogenesis, when germ cells form flagella. May play a role in the transport of flagellar proteins ODF2 and SPAG16 to build sperm flagella and in the removal of redundant sperm cytoplasm. Also involved in autophagy since it is required for trafficking of ATG16L and the expansion of the autophagic compartment. The chain is Intraflagellar transport protein 20 homolog (Ift20) from Mus musculus (Mouse).